The primary structure comprises 753 residues: Dolichyl-phosphate-mannose--protein mannosyltransferase 3 (753 aa).

At 1–50 the chain is on the cytoplasmic side; sequence MPYRVATGYSEKSTDDDLIWRTPIVKEELEDADNFLKDDAELYDKVKNES. The chain crosses the membrane as a helical span at residues 51–71; the sequence is AVSHLDTIVMPIIFTVLGMFT. Over 72-148 the chain is Lumenal; sequence RMYKIGRNNH…IDYVKMRLFQ (77 aa). N-linked (GlcNAc...) asparagine glycosylation is present at N124. A helical membrane pass occupies residues 149–169; the sequence is AMFSSLCVPLAYFTGRAIGFS. Over 170–174 the chain is Cytoplasmic; sequence RLSVW. A helical membrane pass occupies residues 175–195; sequence LFTILVIFENSYATLGKFILL. Topologically, residues 196–235 are lumenal; sequence DSMLLFFTVSSYFCLAKFHTMRKSPFSARWWLWLCLTGLN. Residues 236-256 traverse the membrane as a helical segment; that stretch reads LGCAISVKMVGLFIISVVGIY. Topologically, residues 257 to 282 are cytoplasmic; it reads TISELWNLLSDRSVSWKVYVNHWLAR. Residues 283 to 303 form a helical membrane-spanning segment; that stretch reads IFGLIIIPVCVFLLCFKIHFD. Over 304 to 602 the chain is Lumenal; the sequence is LLSNSGPGDS…IKYFLLGSPA (299 aa). N324 carries N-linked (GlcNAc...) asparagine glycosylation. The 56-residue stretch at 332 to 387 folds into the MIR 1 domain; it reads PRDVALGSSIISIKNQALGGALLHSHVQPFPEGSEQQQVTVYGYSDANNEWFFQRI. N398 carries N-linked (GlcNAc...) asparagine glycosylation. 2 MIR domains span residues 401–457 and 465–523; these read IEFV…IEIV and PTLL…IETH. A helical transmembrane segment spans residues 603 to 623; it reads SVWPSSIAVCALIIHVIFLTL. The Cytoplasmic segment spans residues 624–639; that stretch reads KWQRQCVILSDPVERD. A helical transmembrane segment spans residues 640–660; the sequence is VFVMAAFYPLLAWLLHYMPFV. Residues 661–665 are Lumenal-facing; it reads VMSRV. Residues 666–686 form a helical membrane-spanning segment; sequence VYAHHYLPTLYFALMILSYYF. The Cytoplasmic portion of the chain corresponds to 687-703; that stretch reads DMITKRWATRNTGKFLR. Residues 704–724 form a helical membrane-spanning segment; that stretch reads LGAYIVYGSIVIAGFFYFSPF. Over 725–753 the chain is Lumenal; that stretch reads SFGMDGPVDDYAYLAWLPTWQIVEDIRNT.

This sequence belongs to the glycosyltransferase 39 family. PMT3 and PMT5 form a functional heterodimer. Also forms a minor complex with PMT1.

The protein localises to the endoplasmic reticulum membrane. It carries out the reaction a di-trans,poly-cis-dolichyl beta-D-mannosyl phosphate + L-seryl-[protein] = 3-O-(alpha-D-mannosyl)-L-seryl-[protein] + a di-trans,poly-cis-dolichyl phosphate + H(+). The catalysed reaction is a di-trans,poly-cis-dolichyl beta-D-mannosyl phosphate + L-threonyl-[protein] = 3-O-(alpha-D-mannosyl)-L-threonyl-[protein] + a di-trans,poly-cis-dolichyl phosphate + H(+). Its pathway is protein modification; protein glycosylation. Its function is as follows. Protein O-mannosyltransferase involved in O-glycosylation which is essential for cell wall rigidity. Forms a heterodimeric complex with PMT5 and more rarely with PMT1 to transfer mannose from Dol-P-mannose to Ser or Thr residues on proteins. Seems to have redundant activity to PMT2. In Saccharomyces cerevisiae (strain ATCC 204508 / S288c) (Baker's yeast), this protein is Dolichyl-phosphate-mannose--protein mannosyltransferase 3.